We begin with the raw amino-acid sequence, 37 residues long: Large ribosomal subunit protein bL36 (37 aa).

This sequence belongs to the bacterial ribosomal protein bL36 family.

The protein is Large ribosomal subunit protein bL36 of Staphylococcus aureus (strain Mu3 / ATCC 700698).